A 296-amino-acid chain; its full sequence is Light-independent protochlorophyllide reductase iron-sulfur ATP-binding protein (296 aa).

Residues 39–44 (GIGKST) and K68 each bind ATP. Mg(2+) is bound at residue S43. Residues C124 and C158 each contribute to the [4Fe-4S] cluster site. An ATP-binding site is contributed by 209–210 (NR).

This sequence belongs to the NifH/BchL/ChlL family. Homodimer. Protochlorophyllide reductase is composed of three subunits; ChlL, ChlN and ChlB. It depends on [4Fe-4S] cluster as a cofactor.

The catalysed reaction is chlorophyllide a + oxidized 2[4Fe-4S]-[ferredoxin] + 2 ADP + 2 phosphate = protochlorophyllide a + reduced 2[4Fe-4S]-[ferredoxin] + 2 ATP + 2 H2O. It participates in porphyrin-containing compound metabolism; chlorophyll biosynthesis (light-independent). Its function is as follows. Component of the dark-operative protochlorophyllide reductase (DPOR) that uses Mg-ATP and reduced ferredoxin to reduce ring D of protochlorophyllide (Pchlide) to form chlorophyllide a (Chlide). This reaction is light-independent. The L component serves as a unique electron donor to the NB-component of the complex, and binds Mg-ATP. The protein is Light-independent protochlorophyllide reductase iron-sulfur ATP-binding protein of Synechococcus sp. (strain CC9605).